The sequence spans 241 residues: Chromosome partition protein MukE (241 aa).

The tract at residues 207–241 (DGEAATPDSLSQEKSAVKNDEEIEDELDEGLGEEE) is disordered. The span at 227–241 (EEIEDELDEGLGEEE) shows a compositional bias: acidic residues.

It belongs to the MukE family. In terms of assembly, interacts, and probably forms a ternary complex, with MukF and MukB. The complex formation is stimulated by calcium or magnesium.

It localises to the cytoplasm. It is found in the nucleoid. In terms of biological role, involved in chromosome condensation, segregation and cell cycle progression. May participate in facilitating chromosome segregation by condensation DNA from both sides of a centrally located replisome during cell division. Probably acts via its interaction with MukB and MukF. The sequence is that of Chromosome partition protein MukE from Mannheimia succiniciproducens (strain KCTC 0769BP / MBEL55E).